The sequence spans 809 residues: Probable replication endonuclease from prophage-like region (809 aa).

Catalysis depends on O-(5'-phospho-DNA)-tyrosine intermediate residues Tyr-503 and Tyr-507.

The protein belongs to the phage GPA family.

Functionally, possible endonuclease which induces a single-strand cut and initiates DNA replication. The sequence is that of Probable replication endonuclease from prophage-like region from Salmonella typhimurium (strain LT2 / SGSC1412 / ATCC 700720).